The sequence spans 1197 residues: Envelopment polyprotein (1197 aa).

The N-terminal stretch at Met1 to Ala16 is a signal peptide. The Cytoplasmic portion of the chain corresponds to Ile17–Thr130. The tract at residues Met131–Ala153 is internal signal sequence for glycoprotein N. Residues Glu154–Ala582 lie on the Lumenal side of the membrane. Cystine bridges form between Cys179/Cys188, Cys229/Cys239, Cys250/Cys281, Cys271/Cys284, Cys304/Cys456, Cys322/Cys332, Cys374/Cys434, Cys402/Cys413, Cys420/Cys425, Cys479/Cys482, Cys486/Cys556, and Cys506/Cys511. The helical transmembrane segment at Leu583–Leu603 threads the bilayer. The Cytoplasmic segment spans residues Tyr604–Pro673. Residues Lys608–Ile650 are golgi retention signal. Residues Val646–Ile650 form an important for correct targeting of the glycoproteins to the Golgi complex but not for heterodimerization region. An internal signal sequence for glycoprotein C region spans residues Tyr675 to Ala690. 12 disulfides stabilise this stretch: Cys691/Cys731, Cys704/Cys713, Cys756/Cys852, Cys771/Cys965, Cys777/Cys825, Cys783/Cys832, Cys788/Cys814, Cys818/Cys823, Cys934/Cys947, Cys1029/Cys1101, Cys1039/Cys1042, and Cys1049/Cys1083. Over Cys691–Thr1159 the chain is Lumenal. Residues Cys777 to Cys783 are fusion loop. A glycan (N-linked (GlcNAc...) asparagine; by host) is linked at Asn794. Residues Gly819–Pro830 form a fusion loop region. N-linked (GlcNAc...) asparagine; by host glycosylation occurs at Asn1035. Asn1077 is a glycosylation site (N-linked (GlcNAc...) asparagine; by host). The helical transmembrane segment at Ile1160–Leu1180 threads the bilayer. Residues Gly1181–Ser1197 are Cytoplasmic-facing.

It belongs to the phlebovirus envelope glycoprotein family. As to quaternary structure, heterodimer with glycoprotein C. Homotrimer (postfusion). Interacts with nucleocapsid protein N and with the polymerase L in order to package them into virus particles. Interacts with host E3 ubiquitin-protein ligase UBR4; this interaction is important for viral RNA production. Interacts with host LRP1; this interaction facilitates virus entry into the host cell. In terms of assembly, heterodimer with glycoprotein C. In terms of processing, specific enzymatic cleavages in vivo yield mature proteins including NSm protein, Glycoprotein C, and Glycoprotein N. Post-translationally, glycosylated. The glycans can attach to host CD209/DC-SIGN, and may play a role in virus entry into dendritic cells. Palmitoylated.

The protein localises to the virion membrane. Its subcellular location is the host Golgi apparatus membrane. The protein resides in the host endoplasmic reticulum membrane. It localises to the host mitochondrion outer membrane. It is found in the host Golgi apparatus. The protein localises to the virion. In terms of biological role, structural component of the virion that interacts with glycoprotein C. It shields the hydrophobic fusion loops of the glycoprotein C, preventing premature fusion. The glycoprotein protrusions are arranged on an icosahedral lattice, with T=12 triangulation. They are able to attach the virion to the host cell receptor CD209/DC-SIGN and to promote fusion of membranes with the late endosome after endocytosis of the virion. Plays a role in the packaging of ribonucleoproteins and polymerase during virus assembly. Its function is as follows. Structural component of the virion that interacts with glycoprotein N. Acts as a class II fusion protein that is activated upon acidification and subsequent repositioning of the glycoprotein N. The glycoprotein protrusions are arranged on an icosahedral lattice, with T=12 triangulation. They are able to attach the virion to the host cell receptor CD209/DC-SIGN and to promote fusion of membranes with the late endosome after endocytosis of the virion. Plays a role in the inhibition of virus-induced apoptosis. Plays a role for virus dissemination in vertebrates. Functionally, plays a role for virus dissemination in mosquitoes. May act as a structural virion protein in insects. The protein is Envelopment polyprotein (GP) of Rift valley fever virus (strain ZH-548 M12) (RVFV).